Reading from the N-terminus, the 456-residue chain is Protein translocase subunit SecY (456 aa).

The Cytoplasmic portion of the chain corresponds to Met-1 to Pro-21. The chain crosses the membrane as a helical span at residues Gly-22–Pro-48. Topologically, residues Leu-49–Gln-59 are extracellular. The segment at residues Phe-60–Leu-67 is an intramembrane region (helical). Residues Phe-60 to Ile-88 traverse the membrane as a discontinuously helical segment. An intramembrane segment occupies Ala-68–Ile-79. Residues Gly-80–Ile-88 constitute an intramembrane region (helical). The Cytoplasmic portion of the chain corresponds to Leu-89–Ala-109. Residues Phe-110–Gly-134 form a helical membrane-spanning segment. Over Ser-135–Pro-141 the chain is Extracellular. A helical transmembrane segment spans residues Gln-142–Ser-166. Topologically, residues Lys-167–Ser-172 are cytoplasmic. The chain crosses the membrane as a helical span at residues Gly-173–Phe-191. The Extracellular portion of the chain corresponds to Asn-192–Tyr-224. Residues Tyr-225 to Arg-246 traverse the membrane as a helical segment. Residues Val-247 to Ser-275 are Cytoplasmic-facing. The helical transmembrane segment at Asn-276–Gln-297 threads the bilayer. At Lys-298–Phe-334 the chain is on the extracellular side. A helical transmembrane segment spans residues Arg-335 to Trp-354. The Cytoplasmic portion of the chain corresponds to Val-355–Ile-397. Residues Thr-398–Gly-416 form a helical membrane-spanning segment. The Extracellular segment spans residues Ser-417–Gly-419. The chain crosses the membrane as a helical span at residues Gly-420–Leu-434. The Cytoplasmic segment spans residues Tyr-435–Asp-456.

Belongs to the SecY/SEC61-alpha family. As to quaternary structure, component of the Sec protein translocase complex. Heterotrimer consisting of alpha (SecY), beta (SecG) and gamma (SecE) subunits. The heterotrimers can form oligomers, although 1 heterotrimer is thought to be able to translocate proteins. Interacts with the ribosome. May interact with SecDF, and other proteins may be involved.

The protein localises to the cell membrane. Its function is as follows. The central subunit of the protein translocation channel SecYEG. Consists of two halves formed by TMs 1-5 and 6-10. These two domains form a lateral gate at the front which open onto the bilayer between TMs 2 and 7, and are clamped together by SecE at the back. The channel is closed by both a pore ring composed of hydrophobic SecY resides and a short helix (helix 2A) on the extracellular side of the membrane which forms a plug. The plug probably moves laterally to allow the channel to open. The ring and the pore may move independently. This Methanothermobacter thermautotrophicus (strain ATCC 29096 / DSM 1053 / JCM 10044 / NBRC 100330 / Delta H) (Methanobacterium thermoautotrophicum) protein is Protein translocase subunit SecY.